The following is a 128-amino-acid chain: MASITSVVKTSELILKSPLLSKIVVPLAKTYVKFSGYRQLGFKMNDLIIEETPNMQLALRRLPPTESYDRVYRLIRATQFSLSHKLATGNDITKPEEDDHYLIPYILDVEAEAFEKDALDNLEVVKRK.

This sequence belongs to the UQCRB/QCR7 family. As to quaternary structure, component of the ubiquinol-cytochrome c oxidoreductase (cytochrome b-c1 complex, complex III, CIII), a multisubunit enzyme composed of 3 respiratory subunits cytochrome b, cytochrome c1 and Rieske protein, 2 core protein subunits, and additional low-molecular weight protein subunits. The complex exists as an obligatory dimer and forms supercomplexes (SCs) in the inner mitochondrial membrane with cytochrome c oxidase (complex IV, CIV).

It localises to the mitochondrion inner membrane. Component of the ubiquinol-cytochrome c oxidoreductase, a multisubunit transmembrane complex that is part of the mitochondrial electron transport chain which drives oxidative phosphorylation. The respiratory chain contains 3 multisubunit complexes succinate dehydrogenase (complex II, CII), ubiquinol-cytochrome c oxidoreductase (cytochrome b-c1 complex, complex III, CIII) and cytochrome c oxidase (complex IV, CIV), that cooperate to transfer electrons derived from NADH and succinate to molecular oxygen, creating an electrochemical gradient over the inner membrane that drives transmembrane transport and the ATP synthase. The cytochrome b-c1 complex catalyzes electron transfer from ubiquinol to cytochrome c, linking this redox reaction to translocation of protons across the mitochondrial inner membrane, with protons being carried across the membrane as hydrogens on the quinol. In the process called Q cycle, 2 protons are consumed from the matrix, 4 protons are released into the intermembrane space and 2 electrons are passed to cytochrome c. The protein is Cytochrome b-c1 complex subunit 7 (QCR7) of Yarrowia lipolytica (strain CLIB 122 / E 150) (Yeast).